The primary structure comprises 143 residues: MSVIRPTTVEVETSLRLVAPDATALPVRASLRYDPADPYAVHVLFHAESAGGEAVSWSFARELLVTGLDEPAGIGDVRVWPWATPRGDFVALALSSPDGNALFEVPRSVLVRFLRRTYVVVARGREAEHLDVDTAVNRLLAGR.

This sequence belongs to the SsgA family. As to quaternary structure, interacts with SsgA. Interacts with FtsZ (via N-terminus).

It localises to the cell septum. Its function is as follows. Involved in sporulation-specific cell division. Required for early stages of sporulation. Important in the process of growth cessation prior to sporulation-specific cell division. Recruits cell division protein FtsZ to the future septum sites and tethers the contractile ring structure (Z ring) to the cytoplasmic membrane during sporulation. Stimulates polymerization and filament length of FtsZ in vitro. This is Sporulation-specific cell division protein SsgB from Salinispora tropica (strain ATCC BAA-916 / DSM 44818 / JCM 13857 / NBRC 105044 / CNB-440).